We begin with the raw amino-acid sequence, 385 residues long: MADQSSEIVNALSSEMEAVSVSSTQASSSSDGFQMSEEVEKRYKIVRSIGEECIQEEELKNLLAKKAAPICYDGFEPSGRMHIAQGVMKVINVNKMTSAGCRVKIWIADWFAQLNNKMGGDLKKIRVVGEYFQEIWKAAGMDNDKVEFLWSSEEINSKADKYWPLVMDIARKNKLPRILRCVQIMGRSETDELSAAQILYPCMQCADIFFLEADICQLGMDQRKVNVLAREYCDDIKRKNKPIILSHHMLPGLQQGQEKMSKSDPLSAIFMEDEEAEVNVKIKKAYCPPKVVKGNPCLEYIKYIILPWFDEFTVERNEEYGGNKTYKSFEDIAADYESGELHPGDLKKGLMNALNKILQPVRDHFKTDARAKNLLKQIKAYRVTR.

The short motif at 77–85 is the 'HIGH' region element; it reads PSGRMHIAQ. Positions 200, 204, 207, and 222 each coordinate L-tyrosine. Residues 259-263 carry the 'KMSKS' region motif; the sequence is KMSKS. K262 is a binding site for ATP.

It belongs to the class-I aminoacyl-tRNA synthetase family.

It localises to the cytoplasm. It is found in the cytosol. It carries out the reaction tRNA(Tyr) + L-tyrosine + ATP = L-tyrosyl-tRNA(Tyr) + AMP + diphosphate + H(+). Functionally, catalyzes the attachment of tyrosine to tRNA(Tyr) in a two-step reaction: tyrosine is first activated by ATP to form Tyr-AMP and then transferred to the acceptor end of tRNA(Tyr). This chain is Tyrosine--tRNA ligase 1, cytoplasmic, found in Arabidopsis thaliana (Mouse-ear cress).